A 269-amino-acid polypeptide reads, in one-letter code: Protein CURLY FLAG LEAF 1 (269 aa).

The disordered stretch occupies residues 17–44 (SLNGGGGGGGGRRRGRRAAAAEGSDDSE). An EAR motif is present at residues 47–52 (TVELNS). One can recognise a WW domain in the interval 54-88 (VALPYHWEQCLDIRTGQVYYINWEDGTRTTIDPRS). Disordered regions lie at residues 83–133 (TIDP…SGYT) and 174–218 (GDDE…SGAG). Composition is skewed to low complexity over residues 87 to 106 (RSSSAYSPSPASRSASSSSR), 121 to 133 (AAAASTTTSSGYT), and 180 to 202 (SSSSSSSSSSSSASSSRGSAVSS). Over residues 203-212 (TLSSFSPTDE) the composition is skewed to polar residues.

In terms of assembly, binds to HDG1.

In terms of biological role, negatively regulates the cuticle development probably by interacting with the HD-ZIP IV transcription factor HDG1. This Oryza sativa subsp. indica (Rice) protein is Protein CURLY FLAG LEAF 1.